A 396-amino-acid polypeptide reads, in one-letter code: MAKAKFERNKPHCNIGTIGHVDHGKTSLTAAITKVLAETGGATFTAYDQIDKAPEEKARGITISTAHVEYETANRHYAHVDCPGHADYVKNMITGAAQMDGGILVVSAADGPMPQTREHILLARQVGVPALVVFLNKCDMVDDPELLELVEMEVRELLSKYDFPGDDIPIIKGSALAALENKDPKLGHDAILELMKAVDSYIPQPERPIDQPFLMPVEDVFSISGRGTVVTGRVERGIIKVGEEIEIVGLRDTVKTTCTGVEMFRKLLDQGQAGDNIGALLRGTKREEVERGQVLCKPGSVKPHTKFKAEAYILTKEEGGRHTPFFTNYRPQFYFRTTDVTGVVHLPEGTEMVMPGDNIAMEVHLIVPIAMEEKLRFAIREGGRTVGAGVVASIIE.

Residues 10-206 (KPHCNIGTIG…AVDSYIPQPE (197 aa)) form the tr-type G domain. A G1 region spans residues 19–26 (GHVDHGKT). GTP is bound at residue 19 to 26 (GHVDHGKT). Threonine 26 is a binding site for Mg(2+). The segment at 60 to 64 (GITIS) is G2. The segment at 81-84 (DCPG) is G3. GTP-binding positions include 81–85 (DCPGH) and 136–139 (NKCD). Residues 136 to 139 (NKCD) are G4. Positions 174–176 (SAL) are G5.

It belongs to the TRAFAC class translation factor GTPase superfamily. Classic translation factor GTPase family. EF-Tu/EF-1A subfamily. Monomer.

It localises to the cytoplasm. It carries out the reaction GTP + H2O = GDP + phosphate + H(+). GTP hydrolase that promotes the GTP-dependent binding of aminoacyl-tRNA to the A-site of ribosomes during protein biosynthesis. This Rhodopseudomonas palustris (strain BisA53) protein is Elongation factor Tu.